The chain runs to 365 residues: MTWSYPVDPYWMVALKALLVVVGLLTAFAFMTLIERRLLARFQVRMGPNRVGPFGLLQPLADAIKSIFKEDIVVAQADRFLFVLAPLISVVFALLAFGLIPFGPPGSFFGYQPWVINLDLGILYLFAVSELAVYGIFLSGWASGSKYSLLGSLRSSASLISYELGLGLALLAPVLLVGSLNLNDIVNWQKEHGWLFLYAFPAFLVYLIASMAEAARTPFDLPEAEQELVGGYHTEYSSIKWALFQMAEYIHFITASALIPTLFLGGWTMPVLEVPYLWMFLKIAFFLFFFIWIRATWFRLRYDQLLRFGWGFLFPLALLWFLVTALVVALDLPRTYLLYLSALSFLVLLGAVLYTPKPARKGGGA.

Transmembrane regions (helical) follow at residues 11–31 (WMVA…FAFM), 80–100 (FLFV…FGLI), 120–140 (LGIL…FLSG), 157–177 (ASLI…VLLV), 192–212 (HGWL…ASMA), 252–272 (FITA…MPVL), 273–293 (EVPY…FIWI), 310–330 (WGFL…VVAL), and 336–356 (YLLY…LYTP).

The protein belongs to the complex I subunit 1 family. NDH-1 is composed of 15 different subunits, Nqo1 to Nqo15. The complex has a L-shaped structure, with the hydrophobic arm (subunits Nqo7, Nqo8 and Nqo10 to Nqo14) embedded in the membrane and the hydrophilic peripheral arm (subunits Nqo1 to Nqo6, Nqo9 and Nqo15) protruding into the bacterial cytoplasm. The hydrophilic domain contains all the redox centers.

Its subcellular location is the cell inner membrane. It carries out the reaction a quinone + NADH + 5 H(+)(in) = a quinol + NAD(+) + 4 H(+)(out). Its function is as follows. NDH-1 shuttles electrons from NADH, via FMN and iron-sulfur (Fe-S) centers, to quinones in the respiratory chain. The immediate electron acceptor for the enzyme in this species is menaquinone. Couples the redox reaction to proton translocation (for every two electrons transferred, four hydrogen ions are translocated across the cytoplasmic membrane), and thus conserves the redox energy in a proton gradient required for the synthesis of ATP. The sequence is that of NADH-quinone oxidoreductase subunit 8 (nqo8) from Thermus thermophilus (strain ATCC 27634 / DSM 579 / HB8).